The sequence spans 498 residues: Glycerol kinase (498 aa).

T12 provides a ligand contact to ADP. Residues T12, T13, and S14 each coordinate ATP. Sn-glycerol 3-phosphate is bound at residue T12. R16 lines the ADP pocket. The sn-glycerol 3-phosphate site is built by R82, E83, Y134, and D243. R82, E83, Y134, D243, and Q244 together coordinate glycerol. ADP-binding residues include T265 and G308. The ATP site is built by T265, G308, Q312, and G409. G409 and N413 together coordinate ADP.

Belongs to the FGGY kinase family. In terms of assembly, homotetramer and homodimer (in equilibrium).

The catalysed reaction is glycerol + ATP = sn-glycerol 3-phosphate + ADP + H(+). It functions in the pathway polyol metabolism; glycerol degradation via glycerol kinase pathway; sn-glycerol 3-phosphate from glycerol: step 1/1. Its activity is regulated as follows. Activated by phosphorylation and inhibited by fructose 1,6-bisphosphate (FBP). Functionally, key enzyme in the regulation of glycerol uptake and metabolism. Catalyzes the phosphorylation of glycerol to yield sn-glycerol 3-phosphate. This chain is Glycerol kinase, found in Clostridium botulinum (strain ATCC 19397 / Type A).